Reading from the N-terminus, the 126-residue chain is Fluoride-specific ion channel FluC (126 aa).

A run of 4 helical transmembrane segments spans residues 4–24, 36–56, 68–88, and 99–119; these read SILAIAIGAAAGALLRWFLGL, GTLAANLVGGYIIGVAVALFA, LIITGFCGGLTTFSTFSAEVV, and AFAAIAVHVSGSLLMTMAGIA. Na(+)-binding residues include G75 and T78.

This sequence belongs to the fluoride channel Fluc/FEX (TC 1.A.43) family.

It localises to the cell inner membrane. It carries out the reaction fluoride(in) = fluoride(out). Na(+) is not transported, but it plays an essential structural role and its presence is essential for fluoride channel function. In terms of biological role, fluoride-specific ion channel. Important for reducing fluoride concentration in the cell, thus reducing its toxicity. The sequence is that of Fluoride-specific ion channel FluC from Chromobacterium violaceum (strain ATCC 12472 / DSM 30191 / JCM 1249 / CCUG 213 / NBRC 12614 / NCIMB 9131 / NCTC 9757 / MK).